The sequence spans 483 residues: Isocitrate dehydrogenase [NADP] (483 aa).

An NADP(+)-binding site is contributed by threonine 74. Positions 83, 85, 89, 99, and 121 each coordinate D-threo-isocitrate. Residue aspartate 232 coordinates Mg(2+). NADP(+) contacts are provided by residues 264–270 (HGSAPDI) and asparagine 277.

This sequence belongs to the isocitrate and isopropylmalate dehydrogenases family. Homodimer. Mg(2+) is required as a cofactor. The cofactor is Mn(2+).

It catalyses the reaction D-threo-isocitrate + NADP(+) = 2-oxoglutarate + CO2 + NADPH. Its function is as follows. Catalyzes the oxidative decarboxylation of isocitrate to 2-oxoglutarate and carbon dioxide with the concomitant reduction of NADP(+). In Rickettsia conorii (strain ATCC VR-613 / Malish 7), this protein is Isocitrate dehydrogenase [NADP] (icd).